The primary structure comprises 91 residues: Small ribosomal subunit protein uS15 (91 aa).

It belongs to the universal ribosomal protein uS15 family. In terms of assembly, part of the 30S ribosomal subunit. Forms a bridge to the 50S subunit in the 70S ribosome, contacting the 23S rRNA.

Its function is as follows. One of the primary rRNA binding proteins, it binds directly to 16S rRNA where it helps nucleate assembly of the platform of the 30S subunit by binding and bridging several RNA helices of the 16S rRNA. Forms an intersubunit bridge (bridge B4) with the 23S rRNA of the 50S subunit in the ribosome. This Hydrogenobaculum sp. (strain Y04AAS1) protein is Small ribosomal subunit protein uS15.